The sequence spans 397 residues: Tryptophan synthase beta chain (397 aa).

Lys87 is modified (N6-(pyridoxal phosphate)lysine).

It belongs to the TrpB family. In terms of assembly, tetramer of two alpha and two beta chains. Pyridoxal 5'-phosphate is required as a cofactor.

It carries out the reaction (1S,2R)-1-C-(indol-3-yl)glycerol 3-phosphate + L-serine = D-glyceraldehyde 3-phosphate + L-tryptophan + H2O. It functions in the pathway amino-acid biosynthesis; L-tryptophan biosynthesis; L-tryptophan from chorismate: step 5/5. In terms of biological role, the beta subunit is responsible for the synthesis of L-tryptophan from indole and L-serine. The chain is Tryptophan synthase beta chain from Escherichia coli O139:H28 (strain E24377A / ETEC).